The following is a 154-amino-acid chain: MAARLCCQLDPSRDVLCLRPVSAESSGRPLPGPFGALSPPSPSAVPADHGAHLSLRGLPVCSFSSAGPCALRFTSARYMETAMNTSHHLPRQLYKWTLGLFVMSTTGVEKYFKDCVFAEWEELGNESRLMTFVLGGCRHKLVCAPAPCNFFTSA.

The interval Pro68 to Phe117 is mitochondrial targeting sequence.

This sequence belongs to the orthohepadnavirus protein X family. In terms of assembly, may form homodimer. May interact with host CEBPA, CFLAR, CREB1, DDB1, E4F1, HBXIP, HSPD1/HSP60, NFKBIA, POLR2E and SMAD4. Interacts with host SMC5-SMC6 complex and induces its degradation. Interacts with host TRPC4AP; leading to prevent ubiquitination of TRPC4AP. Interacts with host PLSCR1; this interaction promotes ubiquitination and degradation of HBx and impairs HBx-mediated cell proliferation. Post-translationally, a fraction may be phosphorylated in insect cells and HepG2 cells, a human hepatoblastoma cell line. Phosphorylated in vitro by host protein kinase C or mitogen-activated protein kinase. N-acetylated in insect cells.

The protein resides in the host cytoplasm. Its subcellular location is the host nucleus. It is found in the host mitochondrion. Functionally, multifunctional protein that plays a role in silencing host antiviral defenses and promoting viral transcription. Does not seem to be essential for HBV infection. May be directly involved in development of cirrhosis and liver cancer (hepatocellular carcinoma). Most of cytosolic activities involve modulation of cytosolic calcium. The effect on apoptosis is controversial depending on the cell types in which the studies have been conducted. May induce apoptosis by localizing in mitochondria and causing loss of mitochondrial membrane potential. May also modulate apoptosis by binding host CFLAR, a key regulator of the death-inducing signaling complex (DISC). Promotes viral transcription by using the host E3 ubiquitin ligase DDB1 to target the SMC5-SMC6 complex to proteasomal degradation. This host complex would otherwise bind to viral episomal DNA, and prevents its transcription. Moderately stimulates transcription of many different viral and cellular transcription elements. Promoters and enhancers stimulated by HBx contain DNA binding sites for NF-kappa-B, AP-1, AP-2, c-EBP, ATF/CREB, or the calcium-activated factor NF-AT. The protein is Protein X of Hepatitis B virus genotype G (isolate IG29227/2000) (HBV-G).